A 146-amino-acid chain; its full sequence is Hemoglobin subunit beta (146 aa).

At valine 1 the chain carries N-acetylvaline. Positions 2–146 (HLTAEEKAAV…VANALAHKYH (145 aa)) constitute a Globin domain. A Phosphothreonine modification is found at threonine 12. Position 44 is a phosphoserine (serine 44). An N6-acetyllysine modification is found at lysine 59. A heme b-binding site is contributed by histidine 63. Lysine 82 is modified (N6-acetyllysine). Histidine 92 contributes to the heme b binding site. Residue cysteine 93 is modified to S-nitrosocysteine. The residue at position 144 (lysine 144) is an N6-acetyllysine.

Belongs to the globin family. As to quaternary structure, heterotetramer of two alpha chains and two beta chains. Red blood cells.

Involved in oxygen transport from the lung to the various peripheral tissues. The polypeptide is Hemoglobin subunit beta (HBB) (Mellivora capensis (Ratel)).